The primary structure comprises 118 residues: V-type proton ATPase subunit F (118 aa).

It belongs to the V-ATPase F subunit family. In terms of assembly, V-ATPase is a heteromultimeric enzyme composed of a peripheral catalytic V1 complex (components A to H) attached to an integral membrane V0 proton pore complex (components: a, c, c', c'', d, e, f and VOA1).

The protein resides in the vacuole membrane. Its function is as follows. Subunit of the V1 complex of vacuolar(H+)-ATPase (V-ATPase), a multisubunit enzyme composed of a peripheral complex (V1) that hydrolyzes ATP and a membrane integral complex (V0) that translocates protons. V-ATPase is responsible for acidifying and maintaining the pH of intracellular compartments. The sequence is that of V-type proton ATPase subunit F from Saccharomyces cerevisiae (strain ATCC 204508 / S288c) (Baker's yeast).